A 154-amino-acid polypeptide reads, in one-letter code: Transcriptional repressor NrdR (154 aa).

A zinc finger lies at 3–34; sequence CPFCGNDETKVLESRQVEEGTAVRRRRECERC. The region spanning 49–139 is the ATP-cone domain; the sequence is LIVVKKDGRR…VYREFKDVQR (91 aa).

This sequence belongs to the NrdR family. Requires Zn(2+) as cofactor.

Its function is as follows. Negatively regulates transcription of bacterial ribonucleotide reductase nrd genes and operons by binding to NrdR-boxes. This chain is Transcriptional repressor NrdR, found in Desulfitobacterium hafniense (strain DSM 10664 / DCB-2).